The primary structure comprises 780 residues: MAPYSLLVTRLQKALGVRQYHVASVLCQRAKVAMSHFEPNEYIHYDLLEKNINIVRKRLNRPLTLSEKIVYGHLDDPASQEIERGKSYLRLRPDRVAMQDATAQMAMLQFISSGLSKVAVPSTIHCDHLIEAQVGGEKDLRRAKDINQEVYNFLATAGAKYGVGFWKPGSGIIHQIILENYAYPGVLLIGTDSHTPNGGGLGGICIGVGGADAVDVMAGIPWELKCPKVIGVKLTGSLSGWSSPKDVILKVAGILTVKGGTGAIVEYHGPGVDSISCTGMATICNMGAEIGATTSVFPYNHRMKKYLSKTGREDIANLADEFKDHLVPDPGCHYDQLIEINLSELKPHINGPFTPDLAHPVAEVGKVAEKEGWPLDIRVGLIGSCTNSSYEDMGRSAAVAKQALAHGLKCKSQFTITPGSEQIRATIERDGYAQILRDLGGIVLANACGPCIGQWDRKDIKKGEKNTIVTSYNRNFTGRNDANPETHAFVTSPEIVTALAIAGTLKFNPETDYLTGTDGKKFRLEAPDADELPKGEFDPGQDTYQHPPKDSSGQHVDVSPTSQRLQLLEPFDKWDGKDLEDLQILIKVKGKCTTDHISAAGPWLKFRGHLDNISNNLLIGAINIENGKANSVRNAVTQEFGPVPDTARYYKKHGIRWVVIGDENYGEGSSREHAALEPRHLGGRAIITKSFARIHETNLKKQGLLPLTFADPADYNKIHPVDKLTIQGLKDFTPGKPLKCIIKHPNGTQETILLNHTFNETQIEWFRAGSALNRMKELQQ.

The transit peptide at 1-27 (MAPYSLLVTRLQKALGVRQYHVASVLC) directs the protein to the mitochondrion. Lys-31 is modified (N6-succinyllysine). Lys-50 bears the N6-acetyllysine; alternate mark. Lys-50 carries the post-translational modification N6-succinyllysine; alternate. Substrate is bound at residue Gln-99. Lys-138 and Lys-144 each carry N6-acetyllysine; alternate. 2 positions are modified to N6-succinyllysine; alternate: Lys-138 and Lys-144. 192–194 (DSH) contributes to the substrate binding site. An N6-acetyllysine; alternate modification is found at Lys-233. Lys-233 carries the N6-succinyllysine; alternate modification. Cys-385 contacts [4Fe-4S] cluster. Position 411 is an N6-succinyllysine (Lys-411). 2 residues coordinate [4Fe-4S] cluster: Cys-448 and Cys-451. Substrate contacts are provided by Arg-474 and Arg-479. Positions 528–537 (DADELPKGEF) are enriched in basic and acidic residues. Residues 528 to 560 (DADELPKGEFDPGQDTYQHPPKDSSGQHVDVSP) form a disordered region. Residue Lys-549 is modified to N6-succinyllysine. The segment covering 551-560 (SSGQHVDVSP) has biased composition (polar residues). At Ser-559 the chain carries Phosphoserine. Lys-573 is subject to N6-acetyllysine; alternate. Position 573 is an N6-succinyllysine; alternate (Lys-573). Lys-577 and Lys-591 each carry N6-succinyllysine. At Lys-605 the chain carries N6-acetyllysine; alternate. Lys-605 is modified (N6-succinyllysine; alternate). Arg-607 is a substrate binding site. Lys-628 bears the N6-succinyllysine mark. Ser-670 carries the phosphoserine modification. 670–671 (SR) is a substrate binding site. An N6-succinyllysine modification is found at Lys-689. An N6-acetyllysine; alternate mark is found at Lys-723 and Lys-730. 2 positions are modified to N6-succinyllysine; alternate: Lys-723 and Lys-730. Residues Lys-736, Lys-739, and Lys-743 each carry the N6-acetyllysine modification.

This sequence belongs to the aconitase/IPM isomerase family. As to quaternary structure, monomer. [4Fe-4S] cluster is required as a cofactor. In terms of processing, forms covalent cross-links mediated by transglutaminase TGM2, between a glutamine and the epsilon-amino group of a lysine residue, forming homopolymers and heteropolymers.

It localises to the mitochondrion. The catalysed reaction is citrate = D-threo-isocitrate. It participates in carbohydrate metabolism; tricarboxylic acid cycle; isocitrate from oxaloacetate: step 2/2. Its function is as follows. Catalyzes the isomerization of citrate to isocitrate via cis-aconitate. The chain is Aconitate hydratase, mitochondrial (ACO2) from Homo sapiens (Human).